A 489-amino-acid polypeptide reads, in one-letter code: MSRRNYKVLYVSGEVSPFVRTSALADFMASFPQALEEEGFEARIMMPKYGTINDRKFRLHDVLRLSDIEVPLREKTDMLNVKVTALPSSKIQTYFLYNEKYFKRNGLFTDVYLGNDLKGNTEKVIFFNVGVLETLVRLGWKPDIIHCHDWYASLIPLLLKTVYRDHEFFKGIKTVLTIHNAYRQGVLPFKVFEKLLPEEVSGALHRSAENVNMLYTGVENADMLTTTSKLHADEILHDEIPGCGLQQILAGQNGILHGIVNGIDTRQWNPSTDKLIKKRFATDRMDGKLDNRAALSEEVHMPFEDGRPVVGVIMHFDDFQGAVLIEKSLKKLVALDIHLLICGAGDKKYEKSFRDFADAHPDRVSLSTDCPESFLHLAIAGLDMLVMAGKIESCGMLQMFAMSYGTIPVAYAGGGIVETIDEVSEGGGSGFIFREYTPDALVSKLHEAIGLYHDSERWQELVMRAMTRDFAWKGAAEEYAGLYRELLGN.

Residue R20 participates in ADP-alpha-D-glucose binding.

This sequence belongs to the glycosyltransferase 1 family. Bacterial/plant glycogen synthase subfamily.

The enzyme catalyses [(1-&gt;4)-alpha-D-glucosyl](n) + ADP-alpha-D-glucose = [(1-&gt;4)-alpha-D-glucosyl](n+1) + ADP + H(+). The protein operates within glycan biosynthesis; glycogen biosynthesis. In terms of biological role, synthesizes alpha-1,4-glucan chains using ADP-glucose. The protein is Glycogen synthase of Chlorobium luteolum (strain DSM 273 / BCRC 81028 / 2530) (Pelodictyon luteolum).